Here is a 475-residue protein sequence, read N- to C-terminus: Aspartyl/glutamyl-tRNA(Asn/Gln) amidotransferase subunit B (475 aa).

The protein belongs to the GatB/GatE family. GatB subfamily. In terms of assembly, heterotrimer of A, B and C subunits.

It catalyses the reaction L-glutamyl-tRNA(Gln) + L-glutamine + ATP + H2O = L-glutaminyl-tRNA(Gln) + L-glutamate + ADP + phosphate + H(+). It carries out the reaction L-aspartyl-tRNA(Asn) + L-glutamine + ATP + H2O = L-asparaginyl-tRNA(Asn) + L-glutamate + ADP + phosphate + 2 H(+). Functionally, allows the formation of correctly charged Asn-tRNA(Asn) or Gln-tRNA(Gln) through the transamidation of misacylated Asp-tRNA(Asn) or Glu-tRNA(Gln) in organisms which lack either or both of asparaginyl-tRNA or glutaminyl-tRNA synthetases. The reaction takes place in the presence of glutamine and ATP through an activated phospho-Asp-tRNA(Asn) or phospho-Glu-tRNA(Gln). The sequence is that of Aspartyl/glutamyl-tRNA(Asn/Gln) amidotransferase subunit B from Chromobacterium violaceum (strain ATCC 12472 / DSM 30191 / JCM 1249 / CCUG 213 / NBRC 12614 / NCIMB 9131 / NCTC 9757 / MK).